The primary structure comprises 436 residues: MSMFLDTAKIKVKAGNGGDGMVAFRREKYVPNGGPWGGDGGRGGNVVFVVDEGLRTLMDFRYNRHFKADSGEKGMTKGMHGRGAEDLRVRVPQGTTVRDAETGKVLTDLIEHGQEFIVAHGGRGGRGNIRFATPKNPAPEISENGEPGQERELQLELKILADVGLVGFPSVGKSTLLSVITSAKPKIGAYHFTTIVPNLGMVRTQSGESFAVADLPGLIEGASQGVGLGTQFLRHIERTRVILHIIDMSASEGRDPYEDYLAINKELESYNLRLMERPQIIVANKMDMPESQENLEDFKKKLAENYDEFEELPAIFPISGLTKQGLATLLDATAELLDKTPEFLLYDESDMEEEAYYGFDEEEKAFEISRDDDATWVLSGEKLMKLFNMTNFDRDESVMKFARQLRGMGVDEALRARGAKDGDLVRIGKFEFEFVD.

The Obg domain maps to 2 to 160 (SMFLDTAKIK…RELQLELKIL (159 aa)). Residues 161-338 (ADVGLVGFPS…LLDATAELLD (178 aa)) form the OBG-type G domain. GTP is bound by residues 167-174 (GFPSVGKS), 192-196 (FTTIV), 214-217 (DLPG), 284-287 (NKMD), and 319-321 (SGL). Residues serine 174 and threonine 194 each coordinate Mg(2+). One can recognise an OCT domain in the interval 358–436 (GFDEEEKAFE…IGKFEFEFVD (79 aa)).

Belongs to the TRAFAC class OBG-HflX-like GTPase superfamily. OBG GTPase family. In terms of assembly, monomer. Mg(2+) serves as cofactor.

It localises to the cytoplasm. In terms of biological role, an essential GTPase which binds GTP, GDP and possibly (p)ppGpp with moderate affinity, with high nucleotide exchange rates and a fairly low GTP hydrolysis rate. Plays a role in control of the cell cycle, stress response, ribosome biogenesis and in those bacteria that undergo differentiation, in morphogenesis control. The polypeptide is GTPase Obg (Streptococcus pneumoniae (strain CGSP14)).